The primary structure comprises 64 residues: Disintegrin VA6 (64 aa).

The Disintegrin domain occupies 1 to 64 (NSANPCCDPV…SDCPRNPYKS (64 aa)). Disulfide bonds link Cys-6–Cys-29, Cys-20–Cys-26, Cys-25–Cys-50, and Cys-38–Cys-57. Residues 42-44 (RGD) carry the Cell attachment site motif.

The protein belongs to the venom metalloproteinase (M12B) family. P-II subfamily. P-IId sub-subfamily. In terms of assembly, homodimer; disulfide-linked. As to expression, expressed by the venom gland.

It localises to the secreted. In terms of biological role, poor inhibitor of platelet aggregation. The disintegrin inhibits the adhesion of cells expressing the RGD-dependent integrin alpha-5/beta-1 (ITGA5/ITGB1) to immobilized fibronectin. Inhibition on alpha-IIb/beta-3 (ITGA2B/ITGB3) is low, and there is no inhibition on alpha-1/beta-1 (ITGA1/ITGB1), alpha-2/beta-1 (ITGA2/ITGB1) and alpha-6/beta-1 (ITGA6/ITGB1). The polypeptide is Disintegrin VA6 (Vipera ammodytes ammodytes (Western sand viper)).